The following is a 422-amino-acid chain: UDP-N-acetylglucosamine 1-carboxyvinyltransferase (422 aa).

23–24 lines the phosphoenolpyruvate pocket; that stretch reads KN. Arg92 is a binding site for UDP-N-acetyl-alpha-D-glucosamine. The Proton donor role is filled by Cys116. Cys116 is modified (2-(S-cysteinyl)pyruvic acid O-phosphothioketal). UDP-N-acetyl-alpha-D-glucosamine-binding positions include 121-125, 161-164, Asp306, and Ile328; these read RPVDL and KVSV.

This sequence belongs to the EPSP synthase family. MurA subfamily.

It is found in the cytoplasm. The catalysed reaction is phosphoenolpyruvate + UDP-N-acetyl-alpha-D-glucosamine = UDP-N-acetyl-3-O-(1-carboxyvinyl)-alpha-D-glucosamine + phosphate. Its pathway is cell wall biogenesis; peptidoglycan biosynthesis. Cell wall formation. Adds enolpyruvyl to UDP-N-acetylglucosamine. This is UDP-N-acetylglucosamine 1-carboxyvinyltransferase from Aliivibrio fischeri (strain ATCC 700601 / ES114) (Vibrio fischeri).